A 1198-amino-acid chain; its full sequence is Tetratricopeptide repeat protein 17 (1198 aa).

The TPR 1 repeat unit spans residues 295 to 328 (FTSYYTLGNIYAMLGEYNHSVLCYDHALQAKPGF). Positions 340–382 (CQQKLEQKLEAQHRSLQRTLNELKEYQKQHDHYLRQQEILEKH) form a coiled coil. TPR repeat units follow at residues 619–652 (WLIL…APVQ) and 689–722 (PLTF…STKC). 2 disordered regions span residues 774–793 (LDAA…PVLS) and 902–954 (VKKP…YQSL). Basic residues predominate over residues 902 to 914 (VKKPKGDHKKPPG). TPR repeat units follow at residues 1071-1105 (SWVL…APHQ), 1108-1141 (DVPL…APHF), and 1142-1175 (AVNH…QPEF).

This sequence belongs to the TTC17 family. In terms of assembly, interacts with CATIP.

It localises to the cytoplasm. The protein resides in the cell membrane. It is found in the cytoskeleton. Its function is as follows. Plays a role in primary ciliogenesis by modulating actin polymerization. The protein is Tetratricopeptide repeat protein 17 (Ttc17) of Mus musculus (Mouse).